Reading from the N-terminus, the 503-residue chain is Hexose transporter 1 (503 aa).

Over 1–26 the chain is Cytoplasmic; it reads MKKSSKEISPSQSLKNGGSDHFFNTS. The chain crosses the membrane as a helical span at residues 27–47; that stretch reads LMYVLAACLASFIFGYQVSVL. Over 48 to 76 the chain is Extracellular; it reads NTIKNFIVIEFGWCTGNKVECDDSTLKSS. A disulfide bridge connects residues cysteine 61 and cysteine 68. The chain crosses the membrane as a helical span at residues 77–97; it reads FLLASVFIGAVVGSGFSDYLV. The Cytoplasmic segment spans residues 98–102; sequence QHGRR. A helical membrane pass occupies residues 103–123; sequence FSLLVIYNFFILVSILTSITH. Residues 124-132 lie on the Extracellular side of the membrane; that stretch reads HFHTILFSR. Residues 133–153 traverse the membrane as a helical segment; sequence LLSGFGVGLITVSVPMYISEM. Over 154–163 the chain is Cytoplasmic; that stretch reads THKDKKGAYG. Residues 164-184 traverse the membrane as a helical segment; sequence VLHQLFITFGILVAVLLGMAM. Glutamine 167 is an alpha-D-glucose binding site. Residue glutamine 167 coordinates beta-D-glucose. At 185–205 the chain is on the extracellular side; the sequence is GEAPDAKSVDALGEFQKIWWR. The helical transmembrane segment at 206–226 threads the bilayer; that stretch reads LMFFFPCLISILGIVLLTFFY. Topologically, residues 227–291 are cytoplasmic; sequence KEETPYYLFE…RAMQIPSYRN (65 aa). Residues 292-312 form a helical membrane-spanning segment; the sequence is VILLGCILSGLQQFTGINVLV. Residues glutamine 303, glutamine 304, and asparagine 309 each contribute to the alpha-D-glucose site. Glutamine 303 contacts beta-D-glucose. Asparagine 309 contacts beta-D-glucose. The Extracellular portion of the chain corresponds to 313-329; sequence SNSNELYKEFLSNKLIT. The chain crosses the membrane as a helical span at residues 330–350; sequence TLSVIMTVVNFLMTFPAIYIV. Asparagine 339 contacts beta-D-glucose. The Cytoplasmic portion of the chain corresponds to 351-356; sequence EKLGRK. The helical transmembrane segment at 357-377 threads the bilayer; it reads TLLLCGCAGVTLAAFLPTAIA. Residues 378–391 are Extracellular-facing; that stretch reads NQIDRSSDLVRNLS. The chain crosses the membrane as a helical span at residues 392 to 412; it reads IAATFVMIISFAVSYGPVLWI. Residue tryptophan 411 coordinates alpha-D-glucose. The Cytoplasmic segment spans residues 413-428; sequence YLHEMFPSEIKDSAAS. Residues 429–449 traverse the membrane as a helical segment; sequence LASLVNWVCAIIVVFPSDIII. Topologically, residues 450–454 are extracellular; it reads KKSPT. Residues 455 to 475 traverse the membrane as a helical segment; sequence ILFFIFSGMSILSFLFIFFFI. The Cytoplasmic portion of the chain corresponds to 476–503; that stretch reads KETKGGEIGTSPYITMEERQKHMGKSAV.

It belongs to the major facilitator superfamily. Sugar transporter (TC 2.A.1.1) family. In terms of assembly, homodimer.

It localises to the cell membrane. The catalysed reaction is D-glucose(out) = D-glucose(in). It carries out the reaction D-fructose(out) = D-fructose(in). It catalyses the reaction D-galactose(in) = D-galactose(out). The enzyme catalyses D-mannose(out) = D-mannose(in). The catalysed reaction is D-glucosamine(out) = D-glucosamine(in). It carries out the reaction D-xylose(out) = D-xylose(in). Its activity is regulated as follows. Inhibited by compound 3361 (3-O-((undec-10-en)-1-yl)-D-glucose). Sodium-independent facilitative hexose transporter. Can transport D-glucose and D-fructose. Can transport D-mannose, D-galactose, D-xylose and D-glucosamine. The protein is Hexose transporter 1 of Plasmodium vivax.